Consider the following 1288-residue polypeptide: (E3-independent) E2 ubiquitin-conjugating enzyme UBE2O (1288 aa).

Low complexity-rich tracts occupy residues 1–26 (MADPAAPAPAQAQAAAAPTPAAAPAA) and 34–47 (ATDSASGPSSDSGP). Disordered regions lie at residues 1–51 (MADP…EAGS) and 80–109 (EDSDSEGDDDGRGSSGCSEAGGAGHEEGRA). S45, S82, S84, and S394 each carry phosphoserine. Disordered stretches follow at residues 396–529 (TPDT…KNKV) and 711–743 (ESDYDSVEGSSSGASSDEWEDDSDSWETDNGLV). Residues 401 to 418 (CPRDHSMEDPDKKGEARA) show a composition bias toward basic and acidic residues. S436 is subject to Phosphoserine. Acidic residues predominate over residues 440–450 (MQDEGSEELQE). Residues 462 to 472 (EGGDDGLHSAE) show a composition bias toward basic and acidic residues. The segment covering 473–485 (QDADDEAADDTDD) has biased composition (acidic residues). 2 positions are modified to phosphothreonine: T483 and T486. Low complexity predominate over residues 486 to 502 (TSSVTSSASSTTSSQSG). Phosphoserine is present on S510. A compositionally biased stretch (basic residues) spans 517-528 (NLKRKHKRKKNK). The span at 717–726 (VEGSSSGASS) shows a compositional bias: low complexity. Residues 727–737 (DEWEDDSDSWE) are compositionally biased toward acidic residues. The stretch at 809-879 (RELKEAIKIL…IAEEEKMEAV (71 aa)) forms a coiled coil. A Phosphoserine modification is found at S833. Position 835 is a phosphothreonine (T835). S836 is modified (phosphoserine). The span at 872–890 (EEEKMEAVPDTERKEEKPE) shows a compositional bias: basic and acidic residues. The tract at residues 872–899 (EEEKMEAVPDTERKEEKPEVQSPVKAEW) is disordered. Residue S893 is modified to Phosphoserine. A UBC core domain is found at 950–1110 (KFFSTVRKEM…ALIRVVQSMT (161 aa)). Catalysis depends on C1037, which acts as the Glycyl thioester intermediate. Positions 1158–1247 (GALKDSSSLE…RSFLPEKSGY (90 aa)) are disordered.

It belongs to the ubiquitin-conjugating enzyme family. In terms of assembly, interacts with CPNE1 (via VWFA domain) and CPNE4 (via VWFA domain). Interacts with UBR2. Post-translationally, phosphorylated. Phosphorylation affects subcellular location. Ubiquitinated: autoubiquitinates, possibly affecting its subcellular location. Highly expressed in reticulocytes.

Its subcellular location is the cytoplasm. The protein resides in the nucleus. It catalyses the reaction S-ubiquitinyl-[E1 ubiquitin-activating enzyme]-L-cysteine + [acceptor protein]-L-lysine = [E1 ubiquitin-activating enzyme]-L-cysteine + N(6)-monoubiquitinyl-[acceptor protein]-L-lysine.. Its pathway is protein modification; protein ubiquitination. Its activity is regulated as follows. Inhibited by inorganic arsenite such as phenylarsenoxides. E2/E3 hybrid ubiquitin-protein ligase that displays both E2 and E3 ligase activities and mediates monoubiquitination of target proteins. Negatively regulates TRAF6-mediated NF-kappa-B activation independently of its E2 activity. Acts as a positive regulator of BMP7 signaling by mediating monoubiquitination of SMAD6, thereby regulating adipogenesis. Mediates monoubiquitination at different sites of the nuclear localization signal (NLS) of BAP1, leading to cytoplasmic retention of BAP1. Also able to monoubiquitinate the NLS of other chromatin-associated proteins, such as INO80 and CXXC1, affecting their subcellular location. Acts as a regulator of retrograde transport by assisting the TRIM27:MAGEL2 E3 ubiquitin ligase complex to mediate 'Lys-63'-linked ubiquitination of WASHC1, leading to promote endosomal F-actin assembly. The chain is (E3-independent) E2 ubiquitin-conjugating enzyme UBE2O (Ube2o) from Mus musculus (Mouse).